The sequence spans 447 residues: Phosphoglucosamine mutase (447 aa).

Serine 107 functions as the Phosphoserine intermediate in the catalytic mechanism. Mg(2+) is bound by residues serine 107, aspartate 246, aspartate 248, and aspartate 250. A Phosphoserine modification is found at serine 107.

Belongs to the phosphohexose mutase family. The cofactor is Mg(2+). In terms of processing, activated by phosphorylation.

The catalysed reaction is alpha-D-glucosamine 1-phosphate = D-glucosamine 6-phosphate. Catalyzes the conversion of glucosamine-6-phosphate to glucosamine-1-phosphate. This chain is Phosphoglucosamine mutase, found in Ralstonia nicotianae (strain ATCC BAA-1114 / GMI1000) (Ralstonia solanacearum).